Consider the following 242-residue polypeptide: ATP-dependent dethiobiotin synthetase BioD (242 aa).

ATP is bound at residue 12–17 (EVGKTV). Residue Thr16 coordinates Mg(2+). Lys37 is a catalytic residue. Residue Ser41 coordinates substrate. Residues Asp51 and 112 to 115 (EGAG) contribute to the ATP site. Residues Asp51 and Glu112 each contribute to the Mg(2+) site.

It belongs to the dethiobiotin synthetase family. As to quaternary structure, homodimer. Mg(2+) serves as cofactor.

Its subcellular location is the cytoplasm. The catalysed reaction is (7R,8S)-7,8-diammoniononanoate + CO2 + ATP = (4R,5S)-dethiobiotin + ADP + phosphate + 3 H(+). The protein operates within cofactor biosynthesis; biotin biosynthesis; biotin from 7,8-diaminononanoate: step 1/2. In terms of biological role, catalyzes a mechanistically unusual reaction, the ATP-dependent insertion of CO2 between the N7 and N8 nitrogen atoms of 7,8-diaminopelargonic acid (DAPA, also called 7,8-diammoniononanoate) to form a ureido ring. This chain is ATP-dependent dethiobiotin synthetase BioD, found in Bacillus thuringiensis (strain Al Hakam).